Reading from the N-terminus, the 526-residue chain is Delayed-rectifier potassium channel regulatory subunit KCNS1 (526 aa).

At 1–217 (MLMLLVRGTH…LTMENPGYSL (217 aa)) the chain is on the cytoplasmic side. The helical transmembrane segment at 218–239 (PSKLFSCVSISVVLASIAAMCI) threads the bilayer. Topologically, residues 240-270 (HSLPEYQAREAAAAVAAVAAGRSPEGVRDDP) are extracellular. The chain crosses the membrane as a helical span at residues 271–293 (VLRRLEYFCIAWFSFEVSSRLLL). Residues 294–304 (APSTRNFFCHP) lie on the Cytoplasmic side of the membrane. The helical transmembrane segment at 305 to 322 (LNLIDIVSVLPFYLTLLA) threads the bilayer. At 323–337 (GVALGDQGGKEFGHL) the chain is on the extracellular side. A helical; Voltage-sensor membrane pass occupies residues 338–358 (GKVVQVFRLMRIFRVLKLARH). Residues 359 to 373 (STGLRSLGATLKHSY) lie on the Cytoplasmic side of the membrane. Residues 374–395 (REVGILLLYLAVGVSVFSGVAY) form a helical membrane-spanning segment. The Extracellular segment spans residues 396 to 408 (TAEKEEDVGFNTI). Residues 409-420 (PACWWWGTVSMT) constitute an intramembrane region (helical). Residues 421 to 426 (TVGYGD) carry the Selectivity filter motif. The stretch at 421–428 (TVGYGDVV) is an intramembrane region. The Extracellular segment spans residues 429-435 (PVTVAGK). Residues 436–464 (LAASGCILGGILVVALPITIIFNKFSHFY) traverse the membrane as a helical segment. At 465-526 (RRQKALEAAV…PSEPPHPQMY (62 aa)) the chain is on the cytoplasmic side. Residues 491 to 526 (GVSEASLETSRETSQEGRSADLESQAPSEPPHPQMY) are disordered. Basic and acidic residues predominate over residues 499–511 (TSRETSQEGRSAD).

The protein belongs to the potassium channel family. S (TC 1.A.1.2) subfamily. Kv9.1/KCNS1 sub-subfamily. In terms of assembly, heterotetramer with KCNB1. Heterotetramer with KCNB2. Does not form homomultimers.

It is found in the cell membrane. In terms of biological role, potassium channel regulatory subunit that modulate the delayed rectifier voltage-gated potassium channel activity of KCNB1 and KCNB2 by altering their kinetics, expression levels, and shifting the half-inactivation potential to more polarized values. While it does not form functional channels on its own, it can form functional heterotetrameric channels with KCNB1 and KCNB2. Each regulatory subunit has unique regulatory properties that can lead to extensive inhibition, significant changes in kinetics, and/or substantial shifts in the voltage dependencies of the inactivation process. The protein is Delayed-rectifier potassium channel regulatory subunit KCNS1 of Pan troglodytes (Chimpanzee).